Consider the following 105-residue polypeptide: Large ribosomal subunit protein eL36 (105 aa).

This sequence belongs to the eukaryotic ribosomal protein eL36 family. As to quaternary structure, component of the large ribosomal subunit.

The protein resides in the cytoplasm. The protein localises to the cytosol. Component of the large ribosomal subunit. The ribosome is a large ribonucleoprotein complex responsible for the synthesis of proteins in the cell. The chain is Large ribosomal subunit protein eL36 (rpl36) from Xenopus laevis (African clawed frog).